A 218-amino-acid polypeptide reads, in one-letter code: Mediator of RNA polymerase II transcription subunit 20 (218 aa).

The protein belongs to the Mediator complex subunit 20 family. As to quaternary structure, component of the Mediator complex.

It localises to the nucleus. Component of the Mediator complex, a coactivator involved in the regulated transcription of nearly all RNA polymerase II-dependent genes. Mediator functions as a bridge to convey information from gene-specific regulatory proteins to the basal RNA polymerase II transcription machinery. Mediator is recruited to promoters by direct interactions with regulatory proteins and serves as a scaffold for the assembly of a functional preinitiation complex with RNA polymerase II and the general transcription factors. The protein is Mediator of RNA polymerase II transcription subunit 20 (SRB2) of Yarrowia lipolytica (strain CLIB 122 / E 150) (Yeast).